A 169-amino-acid polypeptide reads, in one-letter code: Myosin regulatory light chain 11 (169 aa).

A N,N,N-trimethylalanine modification is found at A2. Residues S15 and S16 each carry the phosphoserine modification. Phosphothreonine is present on residues T25 and T35. An EF-hand 1 domain is found at 25–60 (TQIQEFKEAFTVIDQNRDGIIDKEDLRDTFAAMGRL). D38, N40, D42, and D49 together coordinate Ca(2+). S75 bears the Phosphoserine mark. EF-hand domains follow at residues 95 to 130 (DPEDVITGAFKVLDPEGKGTIKKQFLEELLTTQCDR) and 131 to 166 (FSQEEIKNMWAAFPPDVGGNVDYKNICYVITHGDAK). T101 carries the phosphothreonine modification.

In terms of assembly, myosin is a hexamer of 2 heavy chains and 4 light chains.

Functionally, myosin regulatory subunit that plays an essential to maintain muscle integrity during early development. Plays a role in muscle contraction. The sequence is that of Myosin regulatory light chain 11 (Myl11) from Rattus norvegicus (Rat).